Reading from the N-terminus, the 359-residue chain is MGCVHSTGSEAKKRSQLIDAQLRLEHDQCGTEVKLLLLGAGESGKSTIVRQMRILHVIGFSKQEKLAYRAVIYSNMIQSMLVIIRVMKALGIDFENSAHKEDAHQFSSHYLHIHNADLSEAFSLELSDLMKNLWSDAGVRRCFKRSREFQLNDSTEYYFNSLDRISETTYLPTQDDILRARVKSTGIVETDFMYKDIYFRMFDVGGQRSERKKWIHCFEGVTAVIFCVALSEYDMKLAEDKIMNRMHESMQLFDSIVNNRWFTETSMILFLNKMDIFEEKIRHIPLNICFPEYKGGTSVTETSNYIRSVFEKLNKRKSTAQKEVYSHFTCATDTNNIRFVFDAVTDIIIRYNLKDCGLF.

Residue Gly2 is the site of N-myristoyl glycine attachment. The S-palmitoyl cysteine moiety is linked to residue Cys3. The region spanning Thr31 to Phe359 is the G-alpha domain. Residues Lys34–Thr47 are G1 motif. GTP contacts are provided by residues Gly39–Ser46, Leu178–Ser184, Asp203–Gln207, Asn272–Asp275, and Ala331. Ser46 is a binding site for Mg(2+). Residues Asp176–Ser184 form a G2 motif region. The segment at Phe199 to Arg208 is G3 motif. Residues Ile268 to Asp275 form a G4 motif region. Positions Thr329 to Thr334 are G5 motif.

It belongs to the G-alpha family. G(i/o/t/z) subfamily. G proteins are composed of 3 units; alpha, beta and gamma. The alpha chain contains the guanine nucleotide binding site.

Its function is as follows. Guanine nucleotide-binding proteins (G proteins) are involved as modulators or transducers in various transmembrane signaling systems. The protein is Guanine nucleotide-binding protein alpha-4 subunit (gpa-4) of Caenorhabditis briggsae.